The primary structure comprises 336 residues: Holliday junction branch migration complex subunit RuvB (336 aa).

The interval 1 to 180 (MRRTGIRLSW…FGIVEHLEYY (180 aa)) is large ATPase domain (RuvB-L). ATP-binding positions include Leu-18, Arg-19, Gly-60, Lys-63, Thr-64, Thr-65, 127-129 (EDF), Arg-170, Tyr-180, and Arg-217. Thr-64 provides a ligand contact to Mg(2+). The interval 181-251 (TPEELAQGVM…RALEALAALG (71 aa)) is small ATPAse domain (RuvB-S). Residues 254–336 (ELGLEKRDRE…PPPVGPLLEP (83 aa)) are head domain (RuvB-H). DNA is bound by residues Arg-309 and Arg-314.

This sequence belongs to the RuvB family. As to quaternary structure, homohexamer. Forms an RuvA(8)-RuvB(12)-Holliday junction (HJ) complex. HJ DNA is sandwiched between 2 RuvA tetramers; dsDNA enters through RuvA and exits via RuvB. An RuvB hexamer assembles on each DNA strand where it exits the tetramer. Each RuvB hexamer is contacted by two RuvA subunits (via domain III) on 2 adjacent RuvB subunits; this complex drives branch migration. In the full resolvosome a probable DNA-RuvA(4)-RuvB(12)-RuvC(2) complex forms which resolves the HJ.

The protein resides in the cytoplasm. The enzyme catalyses ATP + H2O = ADP + phosphate + H(+). The RuvA-RuvB-RuvC complex processes Holliday junction (HJ) DNA during genetic recombination and DNA repair, while the RuvA-RuvB complex plays an important role in the rescue of blocked DNA replication forks via replication fork reversal (RFR). RuvA specifically binds to HJ cruciform DNA, conferring on it an open structure. The RuvB hexamer acts as an ATP-dependent pump, pulling dsDNA into and through the RuvAB complex. RuvB forms 2 homohexamers on either side of HJ DNA bound by 1 or 2 RuvA tetramers; 4 subunits per hexamer contact DNA at a time. Coordinated motions by a converter formed by DNA-disengaged RuvB subunits stimulates ATP hydrolysis and nucleotide exchange. Immobilization of the converter enables RuvB to convert the ATP-contained energy into a lever motion, pulling 2 nucleotides of DNA out of the RuvA tetramer per ATP hydrolyzed, thus driving DNA branch migration. The RuvB motors rotate together with the DNA substrate, which together with the progressing nucleotide cycle form the mechanistic basis for DNA recombination by continuous HJ branch migration. Branch migration allows RuvC to scan DNA until it finds its consensus sequence, where it cleaves and resolves cruciform DNA. This chain is Holliday junction branch migration complex subunit RuvB, found in Thermus thermophilus (strain ATCC BAA-163 / DSM 7039 / HB27).